The sequence spans 740 residues: MNKRHALLLTAVLGMATAYAQTAPTTTTVNTLQTVYRDPSLTSAPITANVGKYVGPLSTFLASIAKSAGYEVVFNFNIDALALINGEIVFGNSTASVTTSYATPLGRPQELPAKPVVHNFSNAPFNEAWPLLMDVYELDYQLVKVGSANVIRIGQRPKQLALPLKFISAESALTAIEKFFGEEKFETVISLDSNNKPFQTTRPTGKFGLPNSIKVIPDSSNKRLIIGSNSEDGIRIRSFVETIDVQSSGKVISTDSISEIYIVRGQKESVLQFLRDSFPELIVTDYASGGLAIEGPRTSVNRAIILLGQVDRAPEIPIVQRIYTVRGQAADITALLAAQYPTLRVTPVGQTGQLVLNGAQAQLDTALALLEQVDRPAPVAESRTVQRVFQLVNASAEEVKATLEGTLARDLTADSNNDVLPNVPVTATDANGNTTVVSVPNALGKTANQGTANAQAQTAQTPANTQQATLIADKRTNSLIVRGTPEQVAQVAELVPQLDQVVPQINVQVRIQEVNERALQSLGLNWRATFGGFNVAVSGGTGLAATFNPTQSFLGFNIFPTLTALETQGLTRRVYDGNVTMQSGQRSLSATGGAQNASSGAAASVKSGGRLEINIPSAAGNIVRQIDYGLNLDFFSPQVAPDGTITLRIRGQVNQPATAITADSLPNLIDFTNSEAQSTITFKNGQTILMSGLLGSTETTNRSGVPFLSSLPGVGAAFGEKRTEKTQSQLLVIITGTVVK.

The N-terminal stretch at M1–A20 is a signal peptide.

The protein belongs to the bacterial secretin family.

The protein resides in the cell envelope. Its function is as follows. Could be part of the type IV piliation system (T4P). May contribute at the cohesion between the S-layer and the outer membrane by forming oligomers. Could also be the main channel through which trafficking is managed. The sequence is that of Probable type IV piliation system protein DR_0774 from Deinococcus radiodurans (strain ATCC 13939 / DSM 20539 / JCM 16871 / CCUG 27074 / LMG 4051 / NBRC 15346 / NCIMB 9279 / VKM B-1422 / R1).